We begin with the raw amino-acid sequence, 336 residues long: Probable allantoicase (336 aa).

It belongs to the allantoicase family.

It catalyses the reaction allantoate + H2O = (S)-ureidoglycolate + urea. Its pathway is nitrogen metabolism; (S)-allantoin degradation; (S)-ureidoglycolate from allantoate (aminidohydrolase route): step 1/1. This chain is Probable allantoicase, found in Ralstonia nicotianae (strain ATCC BAA-1114 / GMI1000) (Ralstonia solanacearum).